Reading from the N-terminus, the 266-residue chain is Putative pyruvate, phosphate dikinase regulatory protein (266 aa).

149–156 is a binding site for ADP; that stretch reads GVSRTSKT.

This sequence belongs to the pyruvate, phosphate/water dikinase regulatory protein family. PDRP subfamily.

The enzyme catalyses N(tele)-phospho-L-histidyl/L-threonyl-[pyruvate, phosphate dikinase] + ADP = N(tele)-phospho-L-histidyl/O-phospho-L-threonyl-[pyruvate, phosphate dikinase] + AMP + H(+). It carries out the reaction N(tele)-phospho-L-histidyl/O-phospho-L-threonyl-[pyruvate, phosphate dikinase] + phosphate + H(+) = N(tele)-phospho-L-histidyl/L-threonyl-[pyruvate, phosphate dikinase] + diphosphate. Functionally, bifunctional serine/threonine kinase and phosphorylase involved in the regulation of the pyruvate, phosphate dikinase (PPDK) by catalyzing its phosphorylation/dephosphorylation. This Geobacillus thermodenitrificans (strain NG80-2) protein is Putative pyruvate, phosphate dikinase regulatory protein.